The chain runs to 437 residues: Trigger factor (437 aa).

A PPIase FKBP-type domain is found at 163-248 (GDRVIIDFEG…LNNVSEPTLP (86 aa)).

Belongs to the FKBP-type PPIase family. Tig subfamily.

It is found in the cytoplasm. The catalysed reaction is [protein]-peptidylproline (omega=180) = [protein]-peptidylproline (omega=0). Involved in protein export. Acts as a chaperone by maintaining the newly synthesized protein in an open conformation. Functions as a peptidyl-prolyl cis-trans isomerase. This is Trigger factor from Neisseria gonorrhoeae (strain NCCP11945).